The sequence spans 141 residues: Putative pre-16S rRNA nuclease (141 aa).

It belongs to the YqgF nuclease family.

It localises to the cytoplasm. In terms of biological role, could be a nuclease involved in processing of the 5'-end of pre-16S rRNA. This chain is Putative pre-16S rRNA nuclease, found in Cupriavidus pinatubonensis (strain JMP 134 / LMG 1197) (Cupriavidus necator (strain JMP 134)).